The sequence spans 227 residues: Probable methylthioribulose-1-phosphate dehydratase (227 aa).

Cysteine 87 lines the substrate pocket. Histidine 105 and histidine 107 together coordinate Zn(2+). Residue glutamate 129 is the Proton donor/acceptor of the active site. Position 185 (histidine 185) interacts with Zn(2+).

It belongs to the aldolase class II family. MtnB subfamily. Requires Zn(2+) as cofactor.

It localises to the cytoplasm. It catalyses the reaction 5-(methylsulfanyl)-D-ribulose 1-phosphate = 5-methylsulfanyl-2,3-dioxopentyl phosphate + H2O. It functions in the pathway amino-acid biosynthesis; L-methionine biosynthesis via salvage pathway; L-methionine from S-methyl-5-thio-alpha-D-ribose 1-phosphate: step 2/6. In terms of biological role, catalyzes the dehydration of methylthioribulose-1-phosphate (MTRu-1-P) into 2,3-diketo-5-methylthiopentyl-1-phosphate (DK-MTP-1-P). The chain is Probable methylthioribulose-1-phosphate dehydratase from Drosophila erecta (Fruit fly).